A 123-amino-acid chain; its full sequence is Ribosome-binding factor A (123 aa).

The protein belongs to the RbfA family. As to quaternary structure, monomer. Binds 30S ribosomal subunits, but not 50S ribosomal subunits or 70S ribosomes.

Its subcellular location is the cytoplasm. Functionally, one of several proteins that assist in the late maturation steps of the functional core of the 30S ribosomal subunit. Associates with free 30S ribosomal subunits (but not with 30S subunits that are part of 70S ribosomes or polysomes). Required for efficient processing of 16S rRNA. May interact with the 5'-terminal helix region of 16S rRNA. This is Ribosome-binding factor A from Magnetococcus marinus (strain ATCC BAA-1437 / JCM 17883 / MC-1).